Reading from the N-terminus, the 1113-residue chain is Carbamoyl phosphate synthase arginine-specific large chain (1113 aa).

Positions 23-420 (QLIKGIDSVL…AFQKAFRQVD (398 aa)) are carboxyphosphate synthetic domain. ATP is bound by residues Arg-150, Arg-190, Gly-196, Gly-197, Lys-227, Leu-229, Glu-234, Gly-260, Ile-261, His-262, Gln-303, and Glu-317. The 193-residue stretch at 154 to 346 (ARALKEINMP…LAYTAAKIAL (193 aa)) folds into the ATP-grasp 1 domain. Gln-303, Glu-317, and Asn-319 together coordinate Mg(2+). Positions 303, 317, and 319 each coordinate Mn(2+). Residues 421 to 568 (PSLLGFQGSD…YVTYNAVKDD (148 aa)) form an oligomerization domain region. Positions 569-955 (VTFGDNGIMV…SYWVALQGLM (387 aa)) are carbamoyl phosphate synthetic domain. Residues 693–888 (STILDTLGLD…FVEIAVKAFL (196 aa)) form the ATP-grasp 2 domain. The ATP site is built by Arg-729, Lys-768, Ile-770, Glu-775, Gly-800, Val-801, His-802, Ser-803, Gln-843, and Glu-859. Mg(2+) contacts are provided by Gln-843, Glu-859, and Asn-861. Residues Gln-843, Glu-859, and Asn-861 each coordinate Mn(2+). Residues 956–1097 (SFCVPLPPSG…EMRQSDGPET (142 aa)) are allosteric domain. Residues 957–1113 (FCVPLPPSGI…WREYLGFKPT (157 aa)) enclose the MGS-like domain.

This sequence belongs to the CarB family. Heterodimer composed of 2 chains; the small (or glutamine) chain promotes the hydrolysis of glutamine to ammonia, which is used by the large (or ammonia) chain to synthesize carbamoyl phosphate. The cofactor is Mg(2+). It depends on Mn(2+) as a cofactor.

The protein resides in the cytoplasm. The enzyme catalyses hydrogencarbonate + L-glutamine + 2 ATP + H2O = carbamoyl phosphate + L-glutamate + 2 ADP + phosphate + 2 H(+). The catalysed reaction is hydrogencarbonate + NH4(+) + 2 ATP = carbamoyl phosphate + 2 ADP + phosphate + 2 H(+). It participates in amino-acid biosynthesis; L-arginine biosynthesis; carbamoyl phosphate from bicarbonate: step 1/1. Its function is as follows. Large subunit of the arginine-specific carbamoyl phosphate synthase (CPSase). CPSase catalyzes the formation of carbamoyl phosphate from the ammonia moiety of glutamine, hydrogencarbonate, and phosphate donated by ATP, constituting the first step of 2 biosynthetic pathways, one leading to arginine and/or urea and the other to pyrimidine nucleotides. The large subunit (synthetase) binds the substrates ammonia (free or transferred from glutamine from the small subunit), hydrogencarbonate and ATP and carries out an ATP-coupled ligase reaction, activating hydrogencarbonate by forming carboxy phosphate which reacts with ammonia to form carbamoyl phosphate. This is Carbamoyl phosphate synthase arginine-specific large chain (CPA2) from Eremothecium gossypii (strain ATCC 10895 / CBS 109.51 / FGSC 9923 / NRRL Y-1056) (Yeast).